Consider the following 286-residue polypeptide: uncharacterized protein (286 aa).

The region spanning 26-268 (PLIILCHGFC…DACHYDIYEG (243 aa)) is the AB hydrolase-1 domain.

It belongs to the AB hydrolase superfamily.

This is an uncharacterized protein from Escherichia coli.